We begin with the raw amino-acid sequence, 53 residues long: Reg12l (53 aa).

A propeptide spanning residues 1–34 is cleaved from the precursor; it reads RVLFRSGDQPADQPAERMQDISPEQNPLFHPDKR. 3 disulfides stabilise this stretch: cysteine 36–cysteine 50, cysteine 37–cysteine 48, and cysteine 42–cysteine 51.

It belongs to the conotoxin M superfamily. Expressed by the venom duct.

The protein localises to the secreted. The protein is Reg12l of Conus regius (Crown cone).